A 325-amino-acid chain; its full sequence is DNA-directed RNA polymerase subunit alpha (325 aa).

Residues 1 to 231 (MQNSLLKPRI…DQLNVFAALE (231 aa)) form an alpha N-terminal domain (alpha-NTD) region. The segment at 246 to 325 (VDPILLRPVD…ENWPPAGLEK (80 aa)) is alpha C-terminal domain (alpha-CTD).

Belongs to the RNA polymerase alpha chain family. Homodimer. The RNAP catalytic core consists of 2 alpha, 1 beta, 1 beta' and 1 omega subunit. When a sigma factor is associated with the core the holoenzyme is formed, which can initiate transcription.

The enzyme catalyses RNA(n) + a ribonucleoside 5'-triphosphate = RNA(n+1) + diphosphate. DNA-dependent RNA polymerase catalyzes the transcription of DNA into RNA using the four ribonucleoside triphosphates as substrates. The protein is DNA-directed RNA polymerase subunit alpha of Janthinobacterium sp. (strain Marseille) (Minibacterium massiliensis).